We begin with the raw amino-acid sequence, 106 residues long: Small ribosomal subunit protein uS10 (106 aa).

The protein belongs to the universal ribosomal protein uS10 family. In terms of assembly, part of the 30S ribosomal subunit.

In terms of biological role, involved in the binding of tRNA to the ribosomes. The sequence is that of Small ribosomal subunit protein uS10 from Prochlorococcus marinus (strain MIT 9301).